The sequence spans 82 residues: Small ribosomal subunit protein bS18 (82 aa).

Positions 1 to 20 (MVDINQIPTRRPFHRRRKTC) are disordered.

This sequence belongs to the bacterial ribosomal protein bS18 family. In terms of assembly, part of the 30S ribosomal subunit. Forms a tight heterodimer with protein bS6.

Functionally, binds as a heterodimer with protein bS6 to the central domain of the 16S rRNA, where it helps stabilize the platform of the 30S subunit. The polypeptide is Small ribosomal subunit protein bS18 (Chelativorans sp. (strain BNC1)).